Reading from the N-terminus, the 633-residue chain is DNA mismatch repair protein MutL (633 aa).

Disordered regions lie at residues 337–364 (RPDD…GEFG) and 383–405 (VGWS…TRPE). The segment covering 385-396 (WSGGSSASGGSS) has biased composition (gly residues).

The protein belongs to the DNA mismatch repair MutL/HexB family.

Functionally, this protein is involved in the repair of mismatches in DNA. It is required for dam-dependent methyl-directed DNA mismatch repair. May act as a 'molecular matchmaker', a protein that promotes the formation of a stable complex between two or more DNA-binding proteins in an ATP-dependent manner without itself being part of a final effector complex. The chain is DNA mismatch repair protein MutL from Pseudomonas aeruginosa (strain LESB58).